Reading from the N-terminus, the 324-residue chain is Glyoxylate/hydroxypyruvate reductase B (324 aa).

Residues Arg237 and Glu266 contribute to the active site. The Proton donor role is filled by His285.

It belongs to the D-isomer specific 2-hydroxyacid dehydrogenase family. GhrB subfamily. Homodimer.

It localises to the cytoplasm. It carries out the reaction glycolate + NADP(+) = glyoxylate + NADPH + H(+). The catalysed reaction is (R)-glycerate + NAD(+) = 3-hydroxypyruvate + NADH + H(+). It catalyses the reaction (R)-glycerate + NADP(+) = 3-hydroxypyruvate + NADPH + H(+). Functionally, catalyzes the NADPH-dependent reduction of glyoxylate and hydroxypyruvate into glycolate and glycerate, respectively. This chain is Glyoxylate/hydroxypyruvate reductase B, found in Shigella sonnei (strain Ss046).